The sequence spans 221 residues: Max dimerization protein 1 (221 aa).

The Nuclear localization signal signature appears at 21–49 (RREREAEHGYASMLPYNSKERDGLKRKSK). Disordered regions lie at residues 28–67 (HGYA…EKNR) and 176–202 (DWSS…DEGY). The bHLH domain occupies 55–107 (NSRSTHNEMEKNRRAHLRLCLEKLKILVPLGPESNRHTTLSLLTRAKSHIKKL). A compositionally biased stretch (polar residues) spans 192–202 (SMQSICSDEGY).

Efficient DNA binding requires dimerization with another bHLH protein. Binds DNA as a heterodimer with MAX.

It is found in the nucleus. In terms of biological role, transcriptional repressor. MAD binds with MAX to form a sequence-specific DNA-binding protein complex which recognizes the core sequence 5'-CAC[GA]TG-3'. MAD thus antagonizes MYC transcriptional activity by competing for MAX. This chain is Max dimerization protein 1 (mxd1), found in Xenopus tropicalis (Western clawed frog).